The following is a 125-amino-acid chain: UPF0251 protein DSY3441 (125 aa).

The protein belongs to the UPF0251 family.

This is UPF0251 protein DSY3441 from Desulfitobacterium hafniense (strain Y51).